Consider the following 517-residue polypeptide: Crotonobetaine/carnitine--CoA ligase (517 aa).

This sequence belongs to the ATP-dependent AMP-binding enzyme family.

It carries out the reaction 4-(trimethylamino)butanoate + ATP + CoA = 4-(trimethylamino)butanoyl-CoA + AMP + diphosphate. It catalyses the reaction crotonobetaine + ATP + CoA = crotonobetainyl-CoA + AMP + diphosphate. The enzyme catalyses (R)-carnitine + ATP + CoA = (R)-carnitinyl-CoA + AMP + diphosphate. Its pathway is amine and polyamine metabolism; carnitine metabolism. Its function is as follows. Catalyzes the transfer of CoA to carnitine, generating the initial carnitinyl-CoA needed for the CaiB reaction cycle. Also has activity toward crotonobetaine and gamma-butyrobetaine. This Salmonella heidelberg (strain SL476) protein is Crotonobetaine/carnitine--CoA ligase.